Consider the following 440-residue polypeptide: Tyrosine--tRNA ligase (440 aa).

Tyrosine 46 is a binding site for L-tyrosine. A 'HIGH' region motif is present at residues 51-60 (PTAASLHIGN). Positions 181 and 185 each coordinate L-tyrosine. A 'KMSKS' region motif is present at residues 241-245 (KFGKS). Lysine 244 serves as a coordination point for ATP. Positions 373–439 (DRVIDAAQAA…GKKALGAVEN (67 aa)) constitute an S4 RNA-binding domain.

This sequence belongs to the class-I aminoacyl-tRNA synthetase family. TyrS type 1 subfamily. As to quaternary structure, homodimer.

The protein resides in the cytoplasm. The enzyme catalyses tRNA(Tyr) + L-tyrosine + ATP = L-tyrosyl-tRNA(Tyr) + AMP + diphosphate + H(+). Catalyzes the attachment of tyrosine to tRNA(Tyr) in a two-step reaction: tyrosine is first activated by ATP to form Tyr-AMP and then transferred to the acceptor end of tRNA(Tyr). The polypeptide is Tyrosine--tRNA ligase (Bifidobacterium longum (strain NCC 2705)).